The following is a 164-amino-acid chain: HTH-type transcriptional regulator IscR (164 aa).

Positions 2–131 (RLTSKGRYAV…NNITLDELVN (130 aa)) constitute an HTH rrf2-type domain. The H-T-H motif DNA-binding region spans 28–51 (LADISERQGISLSYLEQLFSRLRK). 3 residues coordinate [2Fe-2S] cluster: Cys-92, Cys-98, and Cys-104.

The cofactor is [2Fe-2S] cluster.

Functionally, regulates the transcription of several operons and genes involved in the biogenesis of Fe-S clusters and Fe-S-containing proteins. This chain is HTH-type transcriptional regulator IscR, found in Pectobacterium atrosepticum (strain SCRI 1043 / ATCC BAA-672) (Erwinia carotovora subsp. atroseptica).